Reading from the N-terminus, the 241-residue chain is 1-(5-phosphoribosyl)-5-[(5-phosphoribosylamino)methylideneamino] imidazole-4-carboxamide isomerase (241 aa).

The active-site Proton acceptor is Asp-7. The Proton donor role is filled by Asp-129.

The protein belongs to the HisA/HisF family.

It localises to the cytoplasm. It catalyses the reaction 1-(5-phospho-beta-D-ribosyl)-5-[(5-phospho-beta-D-ribosylamino)methylideneamino]imidazole-4-carboxamide = 5-[(5-phospho-1-deoxy-D-ribulos-1-ylimino)methylamino]-1-(5-phospho-beta-D-ribosyl)imidazole-4-carboxamide. Its pathway is amino-acid biosynthesis; L-histidine biosynthesis; L-histidine from 5-phospho-alpha-D-ribose 1-diphosphate: step 4/9. This is 1-(5-phosphoribosyl)-5-[(5-phosphoribosylamino)methylideneamino] imidazole-4-carboxamide isomerase from Buchnera aphidicola subsp. Baizongia pistaciae (strain Bp).